The following is a 1181-amino-acid chain: Integrin alpha-7 (1181 aa).

A signal peptide spans 1–33 (MAGARSRDPWGASGICYLFGSLLVELLFSRAVA). Residues 34-1082 (FNLDVMGALR…MAVVAEGVPW (1049 aa)) lie on the Extracellular side of the membrane. 7 FG-GAP repeats span residues 35 to 103 (NLDV…ETDC), 110 to 175 (QGAD…IRDE), 185 to 238 (EGRP…SADL), 292 to 349 (DRLP…ASRL), 350 to 411 (VPEV…HWAG), 412 to 467 (ISPL…GVVA), and 471 to 530 (QVLE…IAPR). Asn-86 is a glycosylation site (N-linked (GlcNAc...) asparagine). 3 disulfides stabilise this stretch: Cys-94/Cys-103, Cys-140/Cys-163, and Cys-184/Cys-197. Ca(2+) is bound by residues Asp-372, Asn-374, Asp-376, Asp-380, Asp-434, Asn-436, Asp-438, Asp-442, Asp-492, Asp-494, Asn-496, Tyr-498, and Asp-500. 6 disulfides stabilise this stretch: Cys-539–Cys-546, Cys-552–Cys-615, Cys-681–Cys-687, Cys-781–Cys-792, Cys-939–Cys-994, and Cys-1001–Cys-1006. The N-linked (GlcNAc...) asparagine glycan is linked to Asn-786. A compositionally biased stretch (basic and acidic residues) spans 950–961 (VDSRDRRRRELE). Residues 950 to 978 (VDSRDRRRRELEPPEQQEPGERQEPSMSW) are disordered. The N-linked (GlcNAc...) asparagine glycan is linked to Asn-989. Residues Asn-1025 and Asn-1045 are each glycosylated (N-linked (GlcNAc...) asparagine). The chain crosses the membrane as a helical span at residues 1083-1103 (WVILLAVLAGLLVLALLVLLL). Over 1104–1181 (WKMGFFKRAK…PDGHPGPGTA (78 aa)) the chain is Cytoplasmic. Positions 1107–1111 (GFFKR) match the GFFKR motif motif. The tract at residues 1138 to 1181 (EKTGTILRNNWGSPRREGPDAHPILAADGHPELGPDGHPGPGTA) is disordered. 3 consecutive repeat copies span residues 1157-1160 (DAHP), 1165-1168 (DGHP), and 1173-1176 (DGHP). Residues 1157–1176 (DAHPILAADGHPELGPDGHP) are 3 X 4 AA repeats of D-X-H-P.

This sequence belongs to the integrin alpha chain family. As to quaternary structure, heterodimer of an alpha and a beta subunit. The alpha subunit is composed of a heavy and a light chain linked by a disulfide bond. Alpha-7 associates with beta-1. Interacts with COMP. Interacts (via C-terminus intracellular tail region) with CIB1; the interaction is stabilized/increased in a calcium- and magnesium-dependent manner. Post-translationally, ADP-ribosylated on at least two sites of the extracellular domain in skeletal myotubes. A 70 kDa form is created by proteolytic cleavage. Cleavage is elevated during myogenic differentiation and the cleaved form enhances cell adhesion and spreading on laminin. Isoforms containing segment A are predominantly expressed in skeletal muscle. Isoforms containing segment B are abundantly expressed in skeletal muscle, moderately in cardiac muscle, small intestine, colon, ovary and prostate and weakly in lung and testes. Isoforms containing segment X2D are expressed at low levels in fetal and adult skeletal muscle and in cardiac muscle, but are not detected in myoblasts and myotubes. In muscle fibers isoforms containing segment A and B are expressed at myotendinous and neuromuscular junctions; isoforms containing segment C are expressed at neuromuscular junctions and at extrasynaptic sites. Isoforms containing segments X1 or X2 or, at low levels, X1X2 are expressed in fetal and adult skeletal muscle (myoblasts and myotubes) and cardiac muscle.

The protein resides in the membrane. Integrin alpha-7/beta-1 is the primary laminin receptor on skeletal myoblasts and adult myofibers. During myogenic differentiation, it may induce changes in the shape and mobility of myoblasts, and facilitate their localization at laminin-rich sites of secondary fiber formation. It is involved in the maintenance of the myofibers cytoarchitecture as well as for their anchorage, viability and functional integrity. Isoform Alpha-7X2B and isoform Alpha-7X1B promote myoblast migration on laminin 1 and laminin 2/4, but isoform Alpha-7X1B is less active on laminin 1 (In vitro). Acts as a Schwann cell receptor for laminin-2. Acts as a receptor of COMP and mediates its effect on vascular smooth muscle cells (VSMCs) maturation. Required to promote contractile phenotype acquisition in differentiated airway smooth muscle (ASM) cells. This Homo sapiens (Human) protein is Integrin alpha-7 (ITGA7).